The primary structure comprises 294 residues: Shikimate dehydrogenase (NADP(+)) (294 aa).

Residues 25–27 (SAS) and T72 each bind shikimate. The active-site Proton acceptor is the K76. N97 and D112 together coordinate shikimate. NADP(+) contacts are provided by residues 136–140 (GAGGA) and T234. Y236 serves as a coordination point for shikimate. Position 257 (G257) interacts with NADP(+).

It belongs to the shikimate dehydrogenase family. In terms of assembly, homodimer.

The enzyme catalyses shikimate + NADP(+) = 3-dehydroshikimate + NADPH + H(+). Its pathway is metabolic intermediate biosynthesis; chorismate biosynthesis; chorismate from D-erythrose 4-phosphate and phosphoenolpyruvate: step 4/7. Functionally, involved in the biosynthesis of the chorismate, which leads to the biosynthesis of aromatic amino acids. Catalyzes the reversible NADPH linked reduction of 3-dehydroshikimate (DHSA) to yield shikimate (SA). In Symbiobacterium thermophilum (strain DSM 24528 / JCM 14929 / IAM 14863 / T), this protein is Shikimate dehydrogenase (NADP(+)).